We begin with the raw amino-acid sequence, 301 residues long: Small ribosomal subunit protein uS2 (301 aa).

The disordered stretch occupies residues 237–301; sequence PTESWNDTVV…QDWSNSTSQW (65 aa). The span at 264–278 shows a compositional bias: low complexity; the sequence is PQYAPAPQAAAAPVA.

The protein belongs to the universal ribosomal protein uS2 family. Component of the small ribosomal subunit. Mature ribosomes consist of a small (40S) and a large (60S) subunit. The 40S subunit contains about 33 different proteins and 1 molecule of RNA (18S). The 60S subunit contains about 49 different proteins and 3 molecules of RNA (28S, 5.8S and 5S). Interacts with ribosomal protein S21.

It is found in the cytoplasm. Its function is as follows. Required for the assembly and/or stability of the 40S ribosomal subunit. Required for the processing of the 20S rRNA-precursor to mature 18S rRNA in a late step of the maturation of 40S ribosomal subunits. The polypeptide is Small ribosomal subunit protein uS2 (Diaphorina citri (Asian citrus psyllid)).